Here is an 878-residue protein sequence, read N- to C-terminus: Aconitate hydratase A (878 aa).

3 residues coordinate [4Fe-4S] cluster: Cys-426, Cys-492, and Cys-495.

Belongs to the aconitase/IPM isomerase family. In terms of assembly, monomer. Requires [4Fe-4S] cluster as cofactor.

The enzyme catalyses citrate = D-threo-isocitrate. The catalysed reaction is (2S,3R)-3-hydroxybutane-1,2,3-tricarboxylate = 2-methyl-cis-aconitate + H2O. Its pathway is carbohydrate metabolism; tricarboxylic acid cycle; isocitrate from oxaloacetate: step 2/2. It participates in organic acid metabolism; propanoate degradation. Its function is as follows. Involved in the catabolism of short chain fatty acids (SCFA) via the tricarboxylic acid (TCA)(acetyl degradation route) and probably the 2-methylcitrate cycle I (propionate degradation route). Catalyzes the reversible isomerization of citrate to isocitrate via cis-aconitate. Could catalyze the hydration of 2-methyl-cis-aconitate to yield (2R,3S)-2-methylisocitrate. The apo form of AcnA functions as a RNA-binding regulatory protein. This Rickettsia typhi (strain ATCC VR-144 / Wilmington) protein is Aconitate hydratase A (acnA).